Consider the following 255-residue polypeptide: Thiazole synthase (255 aa).

The Schiff-base intermediate with DXP role is filled by Lys-96. 1-deoxy-D-xylulose 5-phosphate contacts are provided by residues Gly-157, 183 to 184 (AG), and 205 to 206 (NT).

Belongs to the ThiG family. As to quaternary structure, homotetramer. Forms heterodimers with either ThiH or ThiS.

Its subcellular location is the cytoplasm. It carries out the reaction [ThiS sulfur-carrier protein]-C-terminal-Gly-aminoethanethioate + 2-iminoacetate + 1-deoxy-D-xylulose 5-phosphate = [ThiS sulfur-carrier protein]-C-terminal Gly-Gly + 2-[(2R,5Z)-2-carboxy-4-methylthiazol-5(2H)-ylidene]ethyl phosphate + 2 H2O + H(+). It functions in the pathway cofactor biosynthesis; thiamine diphosphate biosynthesis. Functionally, catalyzes the rearrangement of 1-deoxy-D-xylulose 5-phosphate (DXP) to produce the thiazole phosphate moiety of thiamine. Sulfur is provided by the thiocarboxylate moiety of the carrier protein ThiS. In vitro, sulfur can be provided by H(2)S. This is Thiazole synthase from Geobacillus thermodenitrificans (strain NG80-2).